Here is a 46-residue protein sequence, read N- to C-terminus: Photosystem II reaction center protein K (46 aa).

Positions 1–9 (MLTLLNTFA) are excised as a propeptide. A helical membrane pass occupies residues 25–45 (LPLIPLFFFLLVFVWQAAVGF).

Belongs to the PsbK family. As to quaternary structure, PSII is composed of 1 copy each of membrane proteins PsbA, PsbB, PsbC, PsbD, PsbE, PsbF, PsbH, PsbI, PsbJ, PsbK, PsbL, PsbM, PsbT, PsbX, PsbY, Psb30/Ycf12, peripheral proteins PsbO, CyanoQ (PsbQ), PsbU, PsbV and a large number of cofactors. It forms dimeric complexes.

The protein localises to the cellular thylakoid membrane. Functionally, one of the components of the core complex of photosystem II (PSII). PSII is a light-driven water:plastoquinone oxidoreductase that uses light energy to abstract electrons from H(2)O, generating O(2) and a proton gradient subsequently used for ATP formation. It consists of a core antenna complex that captures photons, and an electron transfer chain that converts photonic excitation into a charge separation. In Prochlorococcus marinus (strain MIT 9515), this protein is Photosystem II reaction center protein K.